The chain runs to 515 residues: Bifunctional purine biosynthesis protein PurH (515 aa).

Residues 1 to 145 (MTKRALISVS…KNHASVTVVV (145 aa)) form the MGS-like domain.

This sequence belongs to the PurH family.

It catalyses the reaction (6R)-10-formyltetrahydrofolate + 5-amino-1-(5-phospho-beta-D-ribosyl)imidazole-4-carboxamide = 5-formamido-1-(5-phospho-D-ribosyl)imidazole-4-carboxamide + (6S)-5,6,7,8-tetrahydrofolate. It carries out the reaction IMP + H2O = 5-formamido-1-(5-phospho-D-ribosyl)imidazole-4-carboxamide. It functions in the pathway purine metabolism; IMP biosynthesis via de novo pathway; 5-formamido-1-(5-phospho-D-ribosyl)imidazole-4-carboxamide from 5-amino-1-(5-phospho-D-ribosyl)imidazole-4-carboxamide (10-formyl THF route): step 1/1. It participates in purine metabolism; IMP biosynthesis via de novo pathway; IMP from 5-formamido-1-(5-phospho-D-ribosyl)imidazole-4-carboxamide: step 1/1. This is Bifunctional purine biosynthesis protein PurH from Streptococcus agalactiae serotype Ia (strain ATCC 27591 / A909 / CDC SS700).